We begin with the raw amino-acid sequence, 190 residues long: Large ribosomal subunit protein uL5 (190 aa).

This sequence belongs to the universal ribosomal protein uL5 family. Part of the 50S ribosomal subunit; part of the 5S rRNA/L5/L18/L25 subcomplex. Contacts the 5S rRNA and the P site tRNA. Forms a bridge to the 30S subunit in the 70S ribosome.

Functionally, this is one of the proteins that bind and probably mediate the attachment of the 5S RNA into the large ribosomal subunit, where it forms part of the central protuberance. In the 70S ribosome it contacts protein S13 of the 30S subunit (bridge B1b), connecting the 2 subunits; this bridge is implicated in subunit movement. Contacts the P site tRNA; the 5S rRNA and some of its associated proteins might help stabilize positioning of ribosome-bound tRNAs. This is Large ribosomal subunit protein uL5 from Corynebacterium efficiens (strain DSM 44549 / YS-314 / AJ 12310 / JCM 11189 / NBRC 100395).